The primary structure comprises 499 residues: Pleckstrin homology domain-containing family O member 2 (499 aa).

Over residues 1–11 the composition is skewed to basic and acidic residues; the sequence is MEEEGVKEGGQ. Positions 1-21 are disordered; the sequence is MEEEGVKEGGQRPRSAQTADK. The PH domain maps to 18-119; it reads TADKAGWIKK…WIKALNEGIN (102 aa). Ser167 is modified (phosphoserine). The segment at 170-419 is disordered; the sequence is LSRLDLDVPD…RRRQPGEQLH (250 aa). A compositionally biased stretch (pro residues) spans 201–212; it reads RPPMPPAKPSPA. Residues 229-238 are compositionally biased toward low complexity; that stretch reads SAPAPVPASS. Phosphoserine occurs at positions 237 and 238. Positions 246–258 are enriched in acidic residues; the sequence is EDLETPVVEDSDS. Ser273 bears the Phosphoserine mark. A phosphothreonine mark is found at Thr298 and Thr311. Low complexity-rich tracts occupy residues 329–349 and 367–386; these read EASG…GPAE and AAGP…TLPP. Ser399 is modified (phosphoserine). The stretch at 416–492 forms a coiled coil; it reads EQLHRAQLEV…LREKRRELVT (77 aa).

This is Pleckstrin homology domain-containing family O member 2 (PLEKHO2) from Bos taurus (Bovine).